The primary structure comprises 132 residues: Large ribosomal subunit protein bL12 (132 aa).

Belongs to the bacterial ribosomal protein bL12 family. Homodimer. Part of the ribosomal stalk of the 50S ribosomal subunit. Forms a multimeric L10(L12)X complex, where L10 forms an elongated spine to which 2 to 4 L12 dimers bind in a sequential fashion. Binds GTP-bound translation factors.

Forms part of the ribosomal stalk which helps the ribosome interact with GTP-bound translation factors. Is thus essential for accurate translation. This chain is Large ribosomal subunit protein bL12, found in Chloroflexus aurantiacus (strain ATCC 29366 / DSM 635 / J-10-fl).